We begin with the raw amino-acid sequence, 491 residues long: Immediate early protein IE1 (491 aa).

Residues 1 to 11 (MESSAKRKMDP) are compositionally biased toward basic and acidic residues. The tract at residues 1–24 (MESSAKRKMDPDNPDEGPSSKVPR) is nuclear localization signal. A disordered region spans residues 1 to 30 (MESSAKRKMDPDNPDEGPSSKVPRPETPVT). An interaction with host PML, interference with PML sumoylation and disruption of PML-associated nuclear bodies region spans residues 132–346 (ILDKVHEPFE…SVMKRRIEEI (215 aa)). An interaction with host STAT2 region spans residues 373–445 (AIAEESDEEE…EEGAQEERED (73 aa)). Residues 410-420 (ATIPLSSVIVA) form a modulation of STAT3/STAT1 signaling region. Positions 410 to 445 (ATIPLSSVIVAENSDQEESEQSDEEEEEGAQEERED) are interaction with host STAT3. Positions 421–472 (ENSDQEESEQSDEEEEEGAQEEREDTVSVKSEPVSEIEEVAPEEEEDGAEEP) are acidic. Positions 421 to 491 (ENSDQEESEQ…PMVTRSKADQ (71 aa)) are disordered. Residues 423 to 444 (SDQEESEQSDEEEEEGAQEERE) are compositionally biased toward acidic residues. The tract at residues 449–452 (VKSE) is interaction with host SUMO1. Residue Lys450 forms a Glycyl lysine isopeptide (Lys-Gly) (interchain with G-Cter in SUMO) linkage. The segment covering 455–470 (SEIEEVAPEEEEDGAE) has biased composition (acidic residues). The tract at residues 475–491 (SGGKSTHPMVTRSKADQ) is chromosome-tethering domain (CTD), binding to histones.

Belongs to the HHV-5 IE1 protein family. As to quaternary structure, forms homodimers. Interacts with human p53/TP53; this interaction inhibits p53/TP53-dependent transactivation activity. Interacts with host STAT1. Interacts with host STAT2; this interaction promotes viral growth and counteracts the antiviral interferon response. May also interact with the host STAT1-STAT2 heterodimer. Interacts with host STAT3; this interaction leads to STAT3 nuclear accumulation and disruption of IL6-induced STAT3 phosphorylation. Interacts with host PML; this interaction inhibits host PML de novo sumoylation and probably inhibits PML regulation of type I and type II interferon-induced gene expression. Interacts with host DAXX. Interacts with host SP100. Interacts with host E2F1. Interacts with host RB1. Interacts with host HDAC1; this interaction inhibits histone deacetylation and promotes viral transcription. Interacts with host HDAC2; this interaction inhibits histone deacetylation and promotes viral transcription. Interacts with host HDAC3; this interaction inhibits histone deacetylation and promotes viral transcription. Interacts with host PLSCR1; this interaction inhibits IE1 transactivating activity. Post-translationally, sumoylated by host PML/nuclear domain 10. Sumoylation abolishes the interaction with host STAT2 and thus the IE1-mediated repression of interferon-stimulated genes.

The protein resides in the host nucleus. Its function is as follows. Plays an important role in transactivating viral early genes as well as activating its own promoter, probably by altering the viral chromatin structure. Expression of IE1 and IE2 proteins is critical for the establishment of lytic infection and reactivation from viral latency. Disrupts PML-associated ND10 nuclear bodies by interfering with host PML and SP100 sumoylation thereby altering the regulation of type I and type II interferon-induced gene expression. Promotes efficient viral growth by interacting with and directing host SP100 to degradation, leading to enhanced acetylation level of histones. In addition, functions in counteracting the host innate antiviral response. Inhibits the type I interferon pathway by directly interacting with and sequestrating host STAT2. Also targets type II interferon pathway by repressing IL6- and STAT3 target genes. Repression of STAT3 genes is due to STAT3 nuclear accumulation and disruption of IL6-induced STAT3 phosphorylation by IE1. This repression is followed by phosphorylation and activation of STAT1. Inhibits host ISG transcription by sequestering host ISGF3 in a PML- and STAT2- binding dependent manner. Alters host cell cycle progression, probably through its interaction with host E2F1 or RB1 that overcomes the RB1-mediated repression of E2F-responsive promoters. May act as a E3 ubiquitin ligase targeting several host proteins including HES1 and SP100A for ubiquitination and subsequent proteasomal degradation. Impairs the radial migration of immature neurons by downregulating Gap junction alpha-1 protein/GJA1 also via ubiquitination and degradation. In Human cytomegalovirus (strain Towne) (HHV-5), this protein is Immediate early protein IE1 (UL123).